Here is a 380-residue protein sequence, read N- to C-terminus: Protein-tyrosine sulfotransferase A (380 aa).

Residues 1 to 6 (MRKNRE) are Cytoplasmic-facing. A helical; Signal-anchor for type II membrane protein transmembrane segment spans residues 7–27 (LLLVLFLVVFILFYFITARTA). Over 28–380 (DDPYYSNHRE…PIVDNEVSKL (353 aa)) the chain is Lumenal. Asparagine 66 carries N-linked (GlcNAc...) asparagine glycosylation. 79–83 (RSGTT) contacts 3'-phosphoadenylyl sulfate. Cysteine 97 and cysteine 157 are disulfide-bonded. Glutamate 100 functions as the Proton donor/acceptor in the catalytic mechanism. Residues 102–106 (RVIPR) form an interaction with peptide substrate region. Residues arginine 184, serine 192, and arginine 196 each coordinate 3'-phosphoadenylyl sulfate. A disulfide bond links cysteine 226 and cysteine 234. Residues tyrosine 239, 284-293 (SSDQVVKPVN), and lysine 299 each bind 3'-phosphoadenylyl sulfate.

It belongs to the protein sulfotransferase family.

Its subcellular location is the golgi apparatus membrane. It carries out the reaction L-tyrosyl-[protein] + 3'-phosphoadenylyl sulfate = O-sulfo-L-tyrosine-[protein] + adenosine 3',5'-bisphosphate + H(+). In terms of biological role, catalyzes the O-sulfation of tyrosine residues within acidic motifs of polypeptides, using 3'-phosphoadenylyl sulfate (PAPS) as cosubstrate. The protein is Protein-tyrosine sulfotransferase A (tpst-1) of Caenorhabditis elegans.